The chain runs to 337 residues: Tetraacyldisaccharide 4'-kinase (337 aa).

55 to 62 (TIGGNGKT) contacts ATP.

This sequence belongs to the LpxK family.

It catalyses the reaction a lipid A disaccharide + ATP = a lipid IVA + ADP + H(+). The protein operates within glycolipid biosynthesis; lipid IV(A) biosynthesis; lipid IV(A) from (3R)-3-hydroxytetradecanoyl-[acyl-carrier-protein] and UDP-N-acetyl-alpha-D-glucosamine: step 6/6. Transfers the gamma-phosphate of ATP to the 4'-position of a tetraacyldisaccharide 1-phosphate intermediate (termed DS-1-P) to form tetraacyldisaccharide 1,4'-bis-phosphate (lipid IVA). The protein is Tetraacyldisaccharide 4'-kinase of Blochmanniella pennsylvanica (strain BPEN).